A 310-amino-acid polypeptide reads, in one-letter code: 4-hydroxythreonine-4-phosphate dehydrogenase (310 aa).

The substrate site is built by His-126 and Thr-127. 3 residues coordinate a divalent metal cation: His-156, His-195, and His-251. The substrate site is built by Lys-259, Asn-268, and Arg-277.

It belongs to the PdxA family. Homodimer. Zn(2+) serves as cofactor. It depends on Mg(2+) as a cofactor. Requires Co(2+) as cofactor.

It localises to the cytoplasm. It carries out the reaction 4-(phosphooxy)-L-threonine + NAD(+) = 3-amino-2-oxopropyl phosphate + CO2 + NADH. It functions in the pathway cofactor biosynthesis; pyridoxine 5'-phosphate biosynthesis; pyridoxine 5'-phosphate from D-erythrose 4-phosphate: step 4/5. Catalyzes the NAD(P)-dependent oxidation of 4-(phosphooxy)-L-threonine (HTP) into 2-amino-3-oxo-4-(phosphooxy)butyric acid which spontaneously decarboxylates to form 3-amino-2-oxopropyl phosphate (AHAP). The polypeptide is 4-hydroxythreonine-4-phosphate dehydrogenase (Helicobacter acinonychis (strain Sheeba)).